The primary structure comprises 371 residues: Chaperone protein DnaJ (371 aa).

Residues 5-69 (DYYEVLGLSK…QKRAQYDQFG (65 aa)) form the J domain. The segment at 133 to 215 (GKELNVEIPV…CHGSGKVRKR (83 aa)) adopts a CR-type zinc-finger fold. Zn(2+)-binding residues include Cys-146, Cys-149, Cys-163, Cys-166, Cys-189, Cys-192, Cys-203, and Cys-206. CXXCXGXG motif repeat units lie at residues 146 to 153 (CDTCKGSG), 163 to 170 (CKHCSGSG), 189 to 196 (CSHCSGTG), and 203 to 210 (CTTCHGSG).

The protein belongs to the DnaJ family. As to quaternary structure, homodimer. It depends on Zn(2+) as a cofactor.

Its subcellular location is the cytoplasm. Functionally, participates actively in the response to hyperosmotic and heat shock by preventing the aggregation of stress-denatured proteins and by disaggregating proteins, also in an autonomous, DnaK-independent fashion. Unfolded proteins bind initially to DnaJ; upon interaction with the DnaJ-bound protein, DnaK hydrolyzes its bound ATP, resulting in the formation of a stable complex. GrpE releases ADP from DnaK; ATP binding to DnaK triggers the release of the substrate protein, thus completing the reaction cycle. Several rounds of ATP-dependent interactions between DnaJ, DnaK and GrpE are required for fully efficient folding. Also involved, together with DnaK and GrpE, in the DNA replication of plasmids through activation of initiation proteins. The polypeptide is Chaperone protein DnaJ (Bacillus cereus (strain AH820)).